We begin with the raw amino-acid sequence, 208 residues long: Small ribosomal subunit protein uS4 (208 aa).

The region spanning 98-161 (QRLDNVVFRM…KSNPQVVRAL (64 aa)) is the S4 RNA-binding domain.

This sequence belongs to the universal ribosomal protein uS4 family. Part of the 30S ribosomal subunit. Contacts protein S5. The interaction surface between S4 and S5 is involved in control of translational fidelity.

One of the primary rRNA binding proteins, it binds directly to 16S rRNA where it nucleates assembly of the body of the 30S subunit. Functionally, with S5 and S12 plays an important role in translational accuracy. The chain is Small ribosomal subunit protein uS4 from Aliarcobacter butzleri (strain RM4018) (Arcobacter butzleri).